A 161-amino-acid chain; its full sequence is uncharacterized protein (161 aa).

This is an uncharacterized protein from Caenorhabditis elegans.